The following is a 696-amino-acid chain: Protein OS-9 homolog (696 aa).

A signal peptide spans 1–15 (MLVVAFASLLGAARA). N-linked (GlcNAc...) asparagine glycosylation is found at Asn35, Asn46, and Asn68. An MRH domain is found at 106 to 224 (NQCLVSQNGF…QVIVPDLCQL (119 aa)). A disulfide bridge links Cys108 with Cys121. Residues Trp116, Gln128, Asp178, Arg184, Glu206, and Tyr212 each contribute to the a mannooligosaccharide derivative site. Cystine bridges form between Cys177/Cys210 and Cys192/Cys222. N-linked (GlcNAc...) asparagine glycans are attached at residues Asn276, Asn290, and Asn372. Disordered stretches follow at residues 450 to 600 (IEAS…DNSD) and 667 to 696 (TLGN…DDEL). A compositionally biased stretch (polar residues) spans 458–467 (TKASESTPVS). Positions 482–498 (RSRDKEEYFKENEKQGE) are enriched in basic and acidic residues. 3 stretches are compositionally biased toward polar residues: residues 499–518 (ENNA…GTIS), 528–553 (NQKQ…SAND), and 585–597 (NIDN…TLND). N-linked (GlcNAc...) asparagine glycosylation is present at Asn588. The segment covering 685–696 (ESDRNGVIDDEL) has biased composition (basic and acidic residues).

This sequence belongs to the OS-9 family. Interacts with missfolded ER lumenal proteins.

It is found in the endoplasmic reticulum membrane. Functionally, lectin involved in the quality control of the secretory pathway. As a member of the endoplasmic reticulum-associated degradation lumenal (ERAD-L) surveillance system, targets misfolded endoplasmic reticulum lumenal glycoproteins for degradation. This is Protein OS-9 homolog (YOS9) from Candida glabrata (strain ATCC 2001 / BCRC 20586 / JCM 3761 / NBRC 0622 / NRRL Y-65 / CBS 138) (Yeast).